An 84-amino-acid chain; its full sequence is Toxin To10 (84 aa).

Residues 1-19 (MNYSTLIAVASLLTAGTES) form the signal peptide. The 60-residue stretch at 21–80 (KDGYPVEGSCAFPCGYDNAYCDKLCKERKADSGYCYWVNILCYCYGLPDNAAIKGYGRCK) folds into the LCN-type CS-alpha/beta domain. 4 disulfide bridges follow: C30–C79, C34–C55, C41–C62, and C45–C64. Position 81 is a proline amide (P81).

The protein belongs to the long (4 C-C) scorpion toxin superfamily. Sodium channel inhibitor family. Alpha subfamily. As to expression, expressed by the venom gland.

The protein localises to the secreted. Alpha toxins bind voltage-independently at site-3 of sodium channels (Nav) and inhibit the inactivation of the activated channels, thereby blocking neuronal transmission. This is Toxin To10 from Tityus obscurus (Amazonian scorpion).